Consider the following 256-residue polypeptide: Imidazole glycerol phosphate synthase subunit HisF (256 aa).

Catalysis depends on residues aspartate 11 and aspartate 130.

Belongs to the HisA/HisF family. In terms of assembly, heterodimer of HisH and HisF.

It localises to the cytoplasm. The enzyme catalyses 5-[(5-phospho-1-deoxy-D-ribulos-1-ylimino)methylamino]-1-(5-phospho-beta-D-ribosyl)imidazole-4-carboxamide + L-glutamine = D-erythro-1-(imidazol-4-yl)glycerol 3-phosphate + 5-amino-1-(5-phospho-beta-D-ribosyl)imidazole-4-carboxamide + L-glutamate + H(+). It participates in amino-acid biosynthesis; L-histidine biosynthesis; L-histidine from 5-phospho-alpha-D-ribose 1-diphosphate: step 5/9. IGPS catalyzes the conversion of PRFAR and glutamine to IGP, AICAR and glutamate. The HisF subunit catalyzes the cyclization activity that produces IGP and AICAR from PRFAR using the ammonia provided by the HisH subunit. In Cupriavidus necator (strain ATCC 17699 / DSM 428 / KCTC 22496 / NCIMB 10442 / H16 / Stanier 337) (Ralstonia eutropha), this protein is Imidazole glycerol phosphate synthase subunit HisF.